The primary structure comprises 634 residues: Lamin tail domain-containing protein 2 (634 aa).

Residues 1-44 (MRWLRPAGRRREQESVSGHLGPPAGAPAAPETPTCLPDTTPHPA) are disordered. Positions 106 to 169 (SHSQEKLLQN…QKSCLLQLAR (64 aa)) form a coiled coil. Residues 228–237 (FTNMEPSSKQ) show a composition bias toward polar residues. Disordered stretches follow at residues 228-349 (FTNM…TDPD) and 464-575 (HRIP…PAEA). Residues 276 to 287 (SSSGGADSDSSS) show a composition bias toward low complexity. Over residues 310-321 (SEQALVQAGSYS) the composition is skewed to polar residues. A compositionally biased stretch (basic and acidic residues) spans 322–337 (RDSEDLQKTHSPRHGE). Residues 350 to 468 (HWSPELLQSP…EVLSEHRIPR (119 aa)) form the LTD domain. Positions 502 to 513 (PPRPPRPLRKGR) are enriched in basic residues. A compositionally biased stretch (basic and acidic residues) spans 540–550 (HAREGPARPEN).

This Homo sapiens (Human) protein is Lamin tail domain-containing protein 2 (LMNTD2).